Here is a 311-residue protein sequence, read N- to C-terminus: 4-hydroxy-tetrahydrodipicolinate synthase (311 aa).

Threonine 51 serves as a coordination point for pyruvate. Tyrosine 140 functions as the Proton donor/acceptor in the catalytic mechanism. The active-site Schiff-base intermediate with substrate is the lysine 168. Isoleucine 209 is a pyruvate binding site.

It belongs to the DapA family. In terms of assembly, homotetramer; dimer of dimers.

The protein resides in the cytoplasm. The catalysed reaction is L-aspartate 4-semialdehyde + pyruvate = (2S,4S)-4-hydroxy-2,3,4,5-tetrahydrodipicolinate + H2O + H(+). It participates in amino-acid biosynthesis; L-lysine biosynthesis via DAP pathway; (S)-tetrahydrodipicolinate from L-aspartate: step 3/4. Its function is as follows. Catalyzes the condensation of (S)-aspartate-beta-semialdehyde [(S)-ASA] and pyruvate to 4-hydroxy-tetrahydrodipicolinate (HTPA). This Streptococcus pneumoniae (strain ATCC 700669 / Spain 23F-1) protein is 4-hydroxy-tetrahydrodipicolinate synthase.